Consider the following 527-residue polypeptide: MDGFHWTDIVSSMPPSIPPVEIIEQPKQRGMRFRYKCEGRSAGSIPGERSTDTSKTHPTIKINNYQGPARIRISLVTKDSPHKPHPHELVGKDCKDGYYEAELSPDRSIHSFQNLGIQCVKKREVEDAVAHRIRTNNNPFNVSPEELKADYDLNTVCLCFQVFIPDQAAGRMLPLPFVVSQPIYDNRAPNTAELKICRVNKNSGSCLGGDEIFLLCDKVQKEDIEVIFGLGNWEARGIFSQADVHRQVAIVFRTPAFQDTKIRQSVKVQMQLRRPSDKEVSEPMEFQYLPDEGDPHHIDEKRKRTLDNFKHYVKNNPFAGGETRPQRRIAVANRNVPTKSEPIRPSIPVPNPVVSCLPFSMPVLKAENVTSPSTLLSTVNISDFSNLGFSSQPPSQSDHDRLESMLNYPSFPGDANLDLVEMLPHENESRCTSLSSIDNSDFSQLLSESQSSGTLSAALQEPGTSQGTFMAYPESIARLMTNRPNEDEGGERIDSGLINGMFDISREEIHLTSLFELDFSSLLSNMK.

In terms of domain architecture, RHD spans 18 to 306 (PPVEIIEQPK…HIDEKRKRTL (289 aa)). Serine 276 is subject to Phosphoserine; by PKA. Residues 301–304 (KRKR) carry the Nuclear localization signal motif. Transcriptional activation domain regions lie at residues 381–444 (ISDF…DFSQ) and 494–527 (DSGL…SNMK). The 9aaTAD motif lies at 513–521 (SLFELDFSS).

Predominantly in the animal hemisphere of the oocyte; all tissues of early embryo.

Its subcellular location is the nucleus. It localises to the cytoplasm. NF-kappa-B is a pleiotropic transcription factor present in almost all cell types and is the endpoint of a series of signal transduction events that are initiated by a vast array of stimuli related to many biological processes such as inflammation, immunity, differentiation, cell growth, tumorigenesis and apoptosis. NF-kappa-B is a homo- or heterodimeric complex formed by the Rel-like domain-containing proteins. The dimers bind at kappa-B sites in the DNA of their target genes and the individual dimers have distinct preferences for different kappa-B sites that they can bind with distinguishable affinity and specificity. Different dimer combinations act as transcriptional activators or repressors, respectively. NF-kappa-B is controlled by various mechanisms of post-translational modification and subcellular compartmentalization as well as by interactions with other cofactors or corepressors. NF-kappa-B complexes are held in the cytoplasm in an inactive state complexed with members of the NF-kappa-B inhibitor (I-kappa-B) family. In a conventional activation pathway, I-kappa-B is phosphorylated by I-kappa-B kinases (IKKs) in response to different activators, subsequently degraded thus liberating the active NF-kappa-B complex which translocates to the nucleus. RELA shows a weak DNA-binding site which could contribute directly to DNA binding in the NF-kappa-B complex. This is Putative transcription factor p65 homolog (rela) from Xenopus laevis (African clawed frog).